Reading from the N-terminus, the 1356-residue chain is RHO1 GDP-GTP exchange protein 2 (1356 aa).

An N-acetylserine modification is found at Ser2. 2 disordered regions span residues 74-94 (RRSGVEAAIDDSDIPNNEMKG) and 109-175 (EVPD…PRNE). At Ser76 the chain carries Phosphoserine. 2 stretches are compositionally biased toward polar residues: residues 109–125 (EVPDTQSLSSADNTPVS) and 147–157 (HIYSTSNSASR). Residue Ser193 is modified to Phosphoserine. 5 disordered regions span residues 202-291 (LKKQ…RSMS), 303-362 (SFQS…SSSN), 383-409 (SVSGTSLSSPRRSSMTPLSASRPVMSA), 531-571 (GNHS…SQQK), and 626-645 (NISMALDDDDEEKPSWTSSV). The span at 204–221 (KQSSFSTGSASTTPTQAR) shows a compositional bias: polar residues. Ser223 bears the Phosphoserine mark. Basic and acidic residues predominate over residues 235-244 (SSKDLHEQHQ). The segment covering 250-265 (QHNNINNHNNNNTNNN) has biased composition (low complexity). The segment covering 271–281 (VGSSNSNYPQH) has biased composition (polar residues). Residues 282 to 291 (SHSISSRSMS) show a composition bias toward low complexity. Residues 303 to 325 (SFQSKTSNSRKATQKYDITSNPF) are compositionally biased toward polar residues. Over residues 329-338 (HHHHHHHHSS) the composition is skewed to basic residues. Composition is skewed to low complexity over residues 339-362 (NSHSSLNNVHGSGNSSSVMGSSSN) and 383-401 (SVSGTSLSSPRRSSMTPLS). A phosphoserine mark is found at Ser566 and Ser628. The DH domain maps to 659-846 (KRQEAIYEVY…RDFMKRIDQA (188 aa)). The CNH domain occupies 1034–1336 (TNKINSVTSC…RLLQTSTQEI (303 aa)).

Its function is as follows. Stimulates the exchange of RHO1 GDP-bound form into GTP-bound form. The protein is RHO1 GDP-GTP exchange protein 2 (ROM2) of Saccharomyces cerevisiae (strain ATCC 204508 / S288c) (Baker's yeast).